We begin with the raw amino-acid sequence, 538 residues long: Putative outer membrane porin BglH (538 aa).

A signal peptide spans M1–A25.

This sequence belongs to the porin LamB (TC 1.B.3) family.

It localises to the cell outer membrane. Functionally, may be a sugar porin with a broad carbohydrate specificity. This Escherichia coli O6:H1 (strain CFT073 / ATCC 700928 / UPEC) protein is Putative outer membrane porin BglH (bglH).